Consider the following 345-residue polypeptide: Alkaline phosphatase isozyme conversion protein (345 aa).

Residues 1–24 (MFSALRHRTAALALGVCFILPVHA) form the signal peptide. Zn(2+) is bound by residues histidine 117, aspartate 143, glutamate 176, and aspartate 204.

Belongs to the peptidase M28 family. M28C subfamily.

Functionally, this protein, presumably an aminopeptidase, mediates the conversion of E.coli alkaline phosphatase isozyme 1, to isozymes 2 and 3 by removing, one by one, the two N-terminal arginine residues. This chain is Alkaline phosphatase isozyme conversion protein (iap), found in Escherichia coli (strain K12).